A 1196-amino-acid polypeptide reads, in one-letter code: DNA-directed RNA polymerase subunit beta (1196 aa).

This sequence belongs to the RNA polymerase beta chain family. As to quaternary structure, the RNAP catalytic core consists of 2 alpha, 1 beta, 1 beta' and 1 omega subunit. When a sigma factor is associated with the core the holoenzyme is formed, which can initiate transcription.

The catalysed reaction is RNA(n) + a ribonucleoside 5'-triphosphate = RNA(n+1) + diphosphate. Functionally, DNA-dependent RNA polymerase catalyzes the transcription of DNA into RNA using the four ribonucleoside triphosphates as substrates. The chain is DNA-directed RNA polymerase subunit beta from Lactococcus lactis subsp. cremoris (strain SK11).